The chain runs to 369 residues: Gap junction alpha-5 protein (369 aa).

Residues 2–19 (GDWSFLGEFLEEVHKHST) are Cytoplasmic-facing. Residues 20 to 40 (VVGKVWLTVLFIFRMLVLGTA) traverse the membrane as a helical segment. Residues 41–76 (AGPLWGDEQSDFMCDTQQPGCENVCYDKAFPISHVR) are Extracellular-facing. A helical membrane pass occupies residues 77–97 (FWVLQIIFVSTPSLVYMGHAM). Topologically, residues 98 to 169 (HTVRMEEKRK…YSILIRTAME (72 aa)) are cytoplasmic. Residues 170–190 (IAFIVGQYILYGIFLETLYIC) traverse the membrane as a helical segment. Topologically, residues 191–210 (QRAPCPHPVNCYVSRPTEKN) are extracellular. Residues 211–231 (VFIIFMLAVAVLSLFLSLAEL) traverse the membrane as a helical segment. At 232-369 (YHLGWKKAKE…SKARSDDLSV (138 aa)) the chain is on the cytoplasmic side. A disordered region spans residues 347 to 369 (NEKRRFSKASRASSKARSDDLSV).

Belongs to the connexin family. Alpha-type (group II) subfamily. In terms of assembly, a connexon is composed of a hexamer of connexins. Mostly in heart, and in the whole embryo, liver, stomach, and pectoral muscle.

The protein localises to the cell membrane. Its subcellular location is the cell junction. The protein resides in the gap junction. In terms of biological role, one gap junction consists of a cluster of closely packed pairs of transmembrane channels, the connexons, through which materials of low MW diffuse from one cell to a neighboring cell. This chain is Gap junction alpha-5 protein (GJA5), found in Gallus gallus (Chicken).